The following is a 210-amino-acid chain: CASP-like protein 3A2 (210 aa).

Residues 1–45 (MMMNGQKMAAAEVAVQLPESKMVTENIGGAAAAMRPFGRKAEVMN) lie on the Cytoplasmic side of the membrane. A helical membrane pass occupies residues 46–66 (VLLRVLCMVTSVAALSSMVTA). Over 67–92 (QQSSTVSIYGFMLPIQSKWSFSHSFE) the chain is Extracellular. The chain crosses the membrane as a helical span at residues 93–113 (YVVGVSAVVAAHSLLQLLISV). Topologically, residues 114–128 (SRLLRKSPVIQSRSH) are cytoplasmic. A helical transmembrane segment spans residues 129–149 (AWLVFAGDQVFAYAMISAGAA). Over 150–178 (ASGVTNLNRTGIRHTALPNFCKPLQSFCD) the chain is Extracellular. Asn157 carries N-linked (GlcNAc...) asparagine glycosylation. A helical membrane pass occupies residues 179–199 (HVAVSIFFTFLSCFLLAASAV). Residues 200 to 210 (QEVIWLSRSKY) lie on the Cytoplasmic side of the membrane.

This sequence belongs to the Casparian strip membrane proteins (CASP) family. As to quaternary structure, homodimer and heterodimers.

The protein resides in the cell membrane. This chain is CASP-like protein 3A2, found in Populus trichocarpa (Western balsam poplar).